The sequence spans 303 residues: Protoheme IX farnesyltransferase (303 aa).

Transmembrane regions (helical) follow at residues 25-45 (MGLVQGNLIPAFAGAWLAIVM), 54-74 (IPQILLMLVGSTLIMGGACAL), 118-138 (CLFLLNIPSGVLGLIGIVGYV), 166-186 (IGWVAIDGSLSLAAVALFLVV), 230-250 (LVLLLPLPFLLSNLGVTFVVI), and 280-300 (FVYSLNYLVVFFALVVVVSLI).

Belongs to the UbiA prenyltransferase family. Protoheme IX farnesyltransferase subfamily. As to quaternary structure, interacts with CtaA.

The protein localises to the cell membrane. It catalyses the reaction heme b + (2E,6E)-farnesyl diphosphate + H2O = Fe(II)-heme o + diphosphate. It participates in porphyrin-containing compound metabolism; heme O biosynthesis; heme O from protoheme: step 1/1. In terms of biological role, converts heme B (protoheme IX) to heme O by substitution of the vinyl group on carbon 2 of heme B porphyrin ring with a hydroxyethyl farnesyl side group. This is Protoheme IX farnesyltransferase from Staphylococcus epidermidis (strain ATCC 35984 / DSM 28319 / BCRC 17069 / CCUG 31568 / BM 3577 / RP62A).